The primary structure comprises 244 residues: Small ribosomal subunit protein uS3 (244 aa).

In terms of domain architecture, KH type-2 spans 39–107; that stretch reads IRELIKKESF…KLIINVEEIK (69 aa). The interval 216 to 244 is disordered; sequence LPVYKNKKNDKNKKRRNNNRKGKSQAAKN. Basic residues predominate over residues 220 to 238; that stretch reads KNKKNDKNKKRRNNNRKGK.

The protein belongs to the universal ribosomal protein uS3 family. As to quaternary structure, part of the 30S ribosomal subunit. Forms a tight complex with proteins S10 and S14.

Its function is as follows. Binds the lower part of the 30S subunit head. Binds mRNA in the 70S ribosome, positioning it for translation. This is Small ribosomal subunit protein uS3 from Finegoldia magna (strain ATCC 29328 / DSM 20472 / WAL 2508) (Peptostreptococcus magnus).